A 419-amino-acid chain; its full sequence is Phospholipase A1-IIgamma (419 aa).

2 coiled-coil regions span residues 1–21 (MKRKKKEEEEEKLIVTREFAK) and 207–227 (NARDQVLREVGRLLEKYKDEE). The active-site Acyl-ester intermediate is serine 236. Catalysis depends on charge relay system residues serine 236, aspartate 302, and histidine 339.

The protein belongs to the AB hydrolase superfamily. Lipase family. In terms of tissue distribution, expressed in seedlings, stems and siliques, and, to a lower extent, in flowers.

It is found in the cytoplasm. Acylhydrolase that catalyzes the hydrolysis of 1,3-diacylglycerol (1,3-DAG) and 1-monoacylglycerol (1-MAG) at the sn-1 position. High activity toward 1,3-DAG and 1-MAG, but low activity toward 1,2-diacylglycerol (1,2-DAG) and 1-lysophosphatidylcholine (1-LPC), and no activity toward phosphatidylcholine (PC), monogalactosyldiacylglycerol (MGDG), digalactosyldiacylglycerol (DGDG), triacylglycerol (TAG) and 2-monoacylglycerol (2-MAG). May be involved in the negative regulation of seedling establishment by inhibiting the breakdown, beta-oxidation and mobilization of seed storage oils. The protein is Phospholipase A1-IIgamma (DSEL) of Arabidopsis thaliana (Mouse-ear cress).